The primary structure comprises 144 residues: Large ribosomal subunit protein uL15 (144 aa).

The segment at 1-48 (MQLNNLKPAAGSKHAKRRVGRGIGSGLGKTAGRGHKGQKSRSGGFHKV) is disordered. A compositionally biased stretch (gly residues) spans 21-31 (RGIGSGLGKTA).

This sequence belongs to the universal ribosomal protein uL15 family. In terms of assembly, part of the 50S ribosomal subunit.

In terms of biological role, binds to the 23S rRNA. The polypeptide is Large ribosomal subunit protein uL15 (Cupriavidus pinatubonensis (strain JMP 134 / LMG 1197) (Cupriavidus necator (strain JMP 134))).